Here is a 364-residue protein sequence, read N- to C-terminus: 3-dehydroquinate synthase (364 aa).

Residues Asp-71 to Lys-76, Gly-105 to Asp-109, Thr-129 to Thr-130, Lys-142, Lys-151, and Cys-169 to Thr-172 each bind NAD(+). 3 residues coordinate Zn(2+): Glu-184, His-247, and His-264.

The protein belongs to the sugar phosphate cyclases superfamily. Dehydroquinate synthase family. Requires Co(2+) as cofactor. Zn(2+) serves as cofactor. It depends on NAD(+) as a cofactor.

It localises to the cytoplasm. The enzyme catalyses 7-phospho-2-dehydro-3-deoxy-D-arabino-heptonate = 3-dehydroquinate + phosphate. The protein operates within metabolic intermediate biosynthesis; chorismate biosynthesis; chorismate from D-erythrose 4-phosphate and phosphoenolpyruvate: step 2/7. Catalyzes the conversion of 3-deoxy-D-arabino-heptulosonate 7-phosphate (DAHP) to dehydroquinate (DHQ). The protein is 3-dehydroquinate synthase of Klebsiella pneumoniae (strain 342).